The primary structure comprises 476 residues: Glutamate--tRNA ligase (476 aa).

Residues 9–19 (PSPTGLFHIGT) carry the 'HIGH' region motif. A 'KMSKS' region motif is present at residues 248 to 252 (KLSKR). Position 251 (lysine 251) interacts with ATP.

The protein belongs to the class-I aminoacyl-tRNA synthetase family. Glutamate--tRNA ligase type 1 subfamily. As to quaternary structure, monomer.

It localises to the cytoplasm. It catalyses the reaction tRNA(Glu) + L-glutamate + ATP = L-glutamyl-tRNA(Glu) + AMP + diphosphate. Its function is as follows. Catalyzes the attachment of glutamate to tRNA(Glu) in a two-step reaction: glutamate is first activated by ATP to form Glu-AMP and then transferred to the acceptor end of tRNA(Glu). The polypeptide is Glutamate--tRNA ligase (Prochlorococcus marinus (strain AS9601)).